The primary structure comprises 174 residues: uncharacterized protein (174 aa).

Residues T137–E174 are disordered.

This is an uncharacterized protein from Acanthamoeba polyphaga (Amoeba).